We begin with the raw amino-acid sequence, 622 residues long: Membrane protein insertase YidC (622 aa).

Residues 6–26 form a helical membrane-spanning segment; that stretch reads FIAVVLSVLVLVGASFLQELL. The tract at residues 37 to 71 is disordered; it reads AEHTLSAVPEETRTQSAHGGAADTQETTQPAAHPS. 4 consecutive transmembrane segments (helical) span residues 413–433, 483–503, 513–533, and 579–599; these read LIPNWGVAIILVTIAIKVLFF, LSGCLPTLVQMPIIFAMYRLF, MFIPYWIPDLSLADSVWTLPF, and VMPLFFFFFFYDAPSGLLVYW.

The protein belongs to the OXA1/ALB3/YidC family. Type 1 subfamily. In terms of assembly, interacts with the Sec translocase complex via SecD. Specifically interacts with transmembrane segments of nascent integral membrane proteins during membrane integration.

The protein resides in the cell inner membrane. Required for the insertion and/or proper folding and/or complex formation of integral membrane proteins into the membrane. Involved in integration of membrane proteins that insert both dependently and independently of the Sec translocase complex, as well as at least some lipoproteins. Aids folding of multispanning membrane proteins. In Treponema pallidum (strain Nichols), this protein is Membrane protein insertase YidC.